The following is a 748-amino-acid chain: EF-hand domain-containing family member C2 (748 aa).

3 DM10 domains span residues 75–182 (DKQV…VKMG), 226–366 (DRQV…RSKY), and 428–535 (VSNV…EQHA). EF-hand domains are found at residues 556-591 (EQQKTVKQFFTMSDPSSTGSLPYESFRTLLADLDVE) and 631-666 (EKFSEMIQAFTHEDRDRCGQLSSKEARIICKAFRLP).

It localises to the cytoplasm. The protein resides in the cytoskeleton. Its subcellular location is the cilium axoneme. Functionally, microtubule inner protein (MIP) part of the dynein-decorated doublet microtubules (DMTs) in cilia axoneme, which is required for motile cilia beating. This chain is EF-hand domain-containing family member C2 (efhc2), found in Danio rerio (Zebrafish).